Reading from the N-terminus, the 251-residue chain is MSEATALSPAEFEQALRAKGAYYHIYHPFHVAMYEGRATREQIQGWVANRFYYQVNIPLKDAAILANCPDREIRREWIQRLLDHDGAPGEDGGIEAWLRLGQAVGLDPDQLRSQELVLPGVRFAVDAYVNFARRANWQEAASSSLTELFAPQIHQSRLDSWPQHYPWIDPAGYEYFRTRLGQARRDVEHGLAITLQHYTTYEGQQRMLEILQFKLDILWSMLDAMSMAYELNRPPYHSVTDQRVWHKGITL.

The protein belongs to the PqqC family.

The enzyme catalyses 6-(2-amino-2-carboxyethyl)-7,8-dioxo-1,2,3,4,7,8-hexahydroquinoline-2,4-dicarboxylate + 3 O2 = pyrroloquinoline quinone + 2 H2O2 + 2 H2O + H(+). It functions in the pathway cofactor biosynthesis; pyrroloquinoline quinone biosynthesis. Functionally, ring cyclization and eight-electron oxidation of 3a-(2-amino-2-carboxyethyl)-4,5-dioxo-4,5,6,7,8,9-hexahydroquinoline-7,9-dicarboxylic-acid to PQQ. This Pseudomonas syringae pv. syringae (strain B728a) protein is Pyrroloquinoline-quinone synthase.